A 406-amino-acid polypeptide reads, in one-letter code: MSQPITRENFDEWMIPVYAPAPFIPVRGEGSRLWDQQGKEYIDFAGGIAVNALGHAHPELREALNEQASKFWHTGNGYTNEPVLRLAKKLIDATFADRVFFCNSGAEANEAALKLARKFAHDRYGSHKSGIVAFKNAFHGRTLFTVSAGGQPAYSQDFAPLPPDIRHAAYNDINSASALIDDATCAVIVEPIQGEGGVVPASNAFLQGLRELCDRHNALLIFDEVQTGVGRTGELYACMHYGVTPDLLTTAKALGGGFPVGALLATEECASVMTVGTHGTTYGGNPLASAVAGKVLDLINTPEMLNGVKQRHDWFVERLNSINHHYSLFSEVRGLGLLIGCVLNADYAGQAKQISQEAVKAGVMVLIAGGNVVRFAPALNVSEEEVTTGLDRFAAACEHFVSRGSS.

Position 252 is an N6-(pyridoxal phosphate)lysine (K252).

The protein belongs to the class-III pyridoxal-phosphate-dependent aminotransferase family. AstC subfamily. Requires pyridoxal 5'-phosphate as cofactor.

The catalysed reaction is N(2)-succinyl-L-ornithine + 2-oxoglutarate = N-succinyl-L-glutamate 5-semialdehyde + L-glutamate. It functions in the pathway amino-acid degradation; L-arginine degradation via AST pathway; L-glutamate and succinate from L-arginine: step 3/5. Functionally, catalyzes the transamination of N(2)-succinylornithine and alpha-ketoglutarate into N(2)-succinylglutamate semialdehyde and glutamate. Can also act as an acetylornithine aminotransferase. The chain is Succinylornithine transaminase from Escherichia coli O45:K1 (strain S88 / ExPEC).